Here is a 184-residue protein sequence, read N- to C-terminus: Ribosome-recycling factor (184 aa).

The protein belongs to the RRF family.

It localises to the cytoplasm. Functionally, responsible for the release of ribosomes from messenger RNA at the termination of protein biosynthesis. May increase the efficiency of translation by recycling ribosomes from one round of translation to another. The polypeptide is Ribosome-recycling factor (Borrelia hermsii (strain HS1 / DAH)).